The sequence spans 158 residues: Ribosomal RNA large subunit methyltransferase H (158 aa).

S-adenosyl-L-methionine contacts are provided by residues Leu-74, Gly-105, and 124–129 (LGPLTL).

The protein belongs to the RNA methyltransferase RlmH family. As to quaternary structure, homodimer.

Its subcellular location is the cytoplasm. It catalyses the reaction pseudouridine(1915) in 23S rRNA + S-adenosyl-L-methionine = N(3)-methylpseudouridine(1915) in 23S rRNA + S-adenosyl-L-homocysteine + H(+). Its function is as follows. Specifically methylates the pseudouridine at position 1915 (m3Psi1915) in 23S rRNA. This is Ribosomal RNA large subunit methyltransferase H from Xylella fastidiosa (strain 9a5c).